The sequence spans 146 residues: Large ribosomal subunit protein uL15 (146 aa).

The disordered stretch occupies residues valine 18–alanine 45. Positions threonine 30–lysine 39 are enriched in basic residues.

It belongs to the universal ribosomal protein uL15 family. Part of the 50S ribosomal subunit.

Binds to the 23S rRNA. In Anaplasma marginale (strain St. Maries), this protein is Large ribosomal subunit protein uL15.